A 294-amino-acid chain; its full sequence is rRNA 2'-O-methyltransferase fibrillarin (294 aa).

Residues 1–62 (MGKDFKSGGG…GKFGAKGPRG (62 aa)) are disordered. Gly residues predominate over residues 20–56 (GPGGPGGRPFNKGPGGPGGPGGKFGGGRPGGPGGKFG). Arg27, Arg47, and Arg61 each carry asymmetric dimethylarginine. S-adenosyl-L-methionine-binding positions include 151–152 (TT), 170–171 (EF), 195–196 (DA), and 215–218 (DVAQ).

Belongs to the methyltransferase superfamily. Fibrillarin family. In terms of assembly, component of box C/D small nucleolar ribonucleoprotein (snoRNP) particles. It is associated with the U3, U8 and U13 small nuclear RNAs. Post-translationally, by homology to other fibrillarins, some or all of the N-terminal domain arginines are modified to asymmetric dimethylarginine (DMA).

Its subcellular location is the nucleus. The protein localises to the nucleolus. It catalyses the reaction L-glutaminyl-[histone H2A] + S-adenosyl-L-methionine = N(5)-methyl-L-glutaminyl-[histone H2A] + S-adenosyl-L-homocysteine + H(+). In terms of biological role, S-adenosyl-L-methionine-dependent methyltransferase that has the ability to methylate both RNAs and proteins. Involved in pre-rRNA processing. Utilizes the methyl donor S-adenosyl-L-methionine to catalyze the site-specific 2'-hydroxyl methylation of ribose moieties in pre-ribosomal RNA. Site specificity is provided by a guide RNA that base pairs with the substrate. Methylation occurs at a characteristic distance from the sequence involved in base pairing with the guide RNA. Also acts as a protein methyltransferase by mediating methylation of 'Gln-105' of histone H2A (H2AQ105me), a modification that impairs binding of the FACT complex and is specifically present at 35S ribosomal DNA locus. This is rRNA 2'-O-methyltransferase fibrillarin (FIB) from Tetrahymena thermophila.